Consider the following 540-residue polypeptide: Putative cysteine ligase BshC (540 aa).

Residues 425–453 (IEKVEGMIEQQRRLNKDLLDEVAGNQNNI) adopt a coiled-coil conformation.

Belongs to the BshC family.

Involved in bacillithiol (BSH) biosynthesis. May catalyze the last step of the pathway, the addition of cysteine to glucosamine malate (GlcN-Mal) to generate BSH. This is Putative cysteine ligase BshC from Staphylococcus aureus (strain NCTC 8325 / PS 47).